Here is an 826-residue protein sequence, read N- to C-terminus: Copper-transporting ATPase 1 (826 aa).

HMA domains are found at residues 15-80 and 82-147; these read APTD…YEPK and IIQE…YDVR. Cu cation is bound by residues Cys-26, Cys-29, Cys-93, and Cys-96. 6 helical membrane-spanning segments follow: residues 172–192, 209–229, 246–266, 270–290, 429–449, and 457–477; these read LVIL…GSHF, NLYI…LRFF, LVVL…FASG, SGTA…ILLG, AWFV…WYVF, and FALV…MGLA. Catalysis depends on Asp-514, which acts as the 4-aspartylphosphate intermediate. The Mg(2+) site is built by Asp-713 and Asp-717. 2 consecutive transmembrane segments (helical) span residues 772-792 and 795-815; these read FWAF…LYPL and TLLS…FVLG.

It belongs to the cation transport ATPase (P-type) (TC 3.A.3) family. Type IB subfamily.

Its subcellular location is the cell membrane. The enzyme catalyses Cu(2+)(in) + ATP + H2O = Cu(2+)(out) + ADP + phosphate + H(+). In terms of biological role, involved in copper transport. In Rhizobium meliloti (strain 1021) (Ensifer meliloti), this protein is Copper-transporting ATPase 1 (actP1).